Here is a 75-residue protein sequence, read N- to C-terminus: Insecticidal toxin OcyC10 (75 aa).

The first 19 residues, 1–19, serve as a signal peptide directing secretion; the sequence is MNFATKIVILLLVAALILA. 2 disulfide bridges follow: cysteine 50–cysteine 62 and cysteine 56–cysteine 68.

In terms of tissue distribution, expressed by the venom gland.

It localises to the secreted. In terms of biological role, insecticidal toxin. This Opisthacanthus cayaporum (South American scorpion) protein is Insecticidal toxin OcyC10.